The following is a 351-amino-acid chain: MRAVLAREMDGRRVLGRFWSGWRRGLGVRPVPEDAGFGTEARHQRQPRGSCQRSGPLGDQPFAGLLPKNLSREELVDALRAAVVDRKGPLVTLNKPQGLPVTGKPGELTLFSVLPELSQSLGLREQELQVVRASGKESSGLVLLSSCPQTASRLQKYFTHARRAQRPTATYCAVTDGIPAASEGKIQAALKLEHIDGVNLTVPVKAPSRKDILEGVKKTLSHFRVVATGSGCALVQLQPLTVFSSQLQVHMVLQLCPVLGDHMYSARVGTVLGQRFLLPAENNKPQRQVLDEALLRRLHLTPSQAAQLPLHLHLHRLLLPGTRARDTPVELLAPLPPYFSRTLQCLGLRLQ.

A mitochondrion-targeting transit peptide spans 1-25 (MRAVLAREMDGRRVLGRFWSGWRRG). The tract at residues 33–58 (EDAGFGTEARHQRQPRGSCQRSGPLG) is disordered. S71 carries the phosphoserine modification.

Belongs to the pseudouridine synthase RluA family. Forms a regulatory protein-RNA complex, consisting of RCC1L, NGRN, RPUSD3, RPUSD4, TRUB2, FASTKD2 and 16S mt-rRNA.

The protein localises to the mitochondrion matrix. It catalyses the reaction a uridine in mRNA = a pseudouridine in mRNA. Functionally, catalyzes uridine to pseudouridine isomerization (pseudouridylation) of specific mitochondrial mRNAs (mt-mRNAs), a post-transcriptional modification necessary for their translation. Acts at position 390 in COXI mt-mRNA and at position 697-699 in mitochondrial COXIII mt-mRNA. As a component of a functional protein-RNA module, consisting of RCC1L, NGRN, RPUSD3, RPUSD4, TRUB2, FASTKD2 and 16S mitochondrial ribosomal RNA (16S mt-rRNA), controls 16S mt-rRNA abundance and may play a role in mitochondrial ribosome biogenesis. This is Mitochondrial mRNA pseudouridine synthase RPUSD3 from Homo sapiens (Human).